The chain runs to 601 residues: Glutathione-regulated potassium-efflux system protein KefB (601 aa).

13 helical membrane passes run Ser-5–Ala-25, Ile-29–Phe-49, Glu-55–Leu-75, Ile-87–Trp-107, Ala-115–Met-135, Val-152–Gly-172, Trp-180–Arg-202, Phe-207–Gly-227, Leu-230–Leu-250, Gly-268–Tyr-288, Ile-291–Leu-311, Leu-324–Ala-344, and Pro-356–Val-376. The RCK N-terminal domain maps to Lys-400 to Thr-519.

It belongs to the monovalent cation:proton antiporter 2 (CPA2) transporter (TC 2.A.37) family. KefB subfamily. In terms of assembly, interacts with the regulatory subunit KefG.

The protein localises to the cell inner membrane. Functionally, pore-forming subunit of a potassium efflux system that confers protection against electrophiles. Catalyzes K(+)/H(+) antiport. The protein is Glutathione-regulated potassium-efflux system protein KefB of Erwinia tasmaniensis (strain DSM 17950 / CFBP 7177 / CIP 109463 / NCPPB 4357 / Et1/99).